The primary structure comprises 34 residues: Phallacidin proprotein 1 (34 aa).

A propeptide spanning residues 1-10 (MSDINATRLP) is cleaved from the precursor. The cyclopeptide (Ala-Pro) cross-link spans 11 to 17 (AWLVDCP). The segment at residues 12-16 (WLVDC) is a cross-link (2'-cysteinyl-6'-hydroxytryptophan sulfoxide (Trp-Cys)). The propeptide occupies 18-34 (CVGDDVNRLLTRGESLC).

The protein belongs to the MSDIN fungal toxin family. Post-translationally, processed by the macrocyclase-peptidase enzyme POPB to yield a toxic cyclic heptapeptide. POPB first removes 10 residues from the N-terminus. Conformational trapping of the remaining peptide forces the enzyme to release this intermediate rather than proceed to macrocyclization. The enzyme rebinds the remaining peptide in a different conformation and catalyzes macrocyclization of the N-terminal 7 residues.

In terms of biological role, major toxin that belongs to the bicyclic heptapeptides called phallotoxins. Although structurally related to amatoxins, phallotoxins have a different mode of action, which is the stabilization of F-actin. Phallotoxins are poisonous when administered parenterally, but not orally because of poor absorption. In Amanita bisporigera (Destroying angel), this protein is Phallacidin proprotein 1.